The chain runs to 344 residues: Ferrochelatase (344 aa).

Residues H211 and E292 each contribute to the Fe cation site.

This sequence belongs to the ferrochelatase family.

It localises to the cytoplasm. The enzyme catalyses heme b + 2 H(+) = protoporphyrin IX + Fe(2+). Its pathway is porphyrin-containing compound metabolism; protoheme biosynthesis; protoheme from protoporphyrin-IX: step 1/1. In terms of biological role, catalyzes the ferrous insertion into protoporphyrin IX. This chain is Ferrochelatase, found in Methylobacillus flagellatus (strain ATCC 51484 / DSM 6875 / VKM B-1610 / KT).